The sequence spans 323 residues: tRNA (guanine(9)-N1)-methyltransferase (323 aa).

The span at 1-16 (MTEQTSEATVVNNSPA) shows a compositional bias: polar residues. 2 disordered regions span residues 1-34 (MTEQ…EIEE) and 192-215 (TGAP…NSTD). Residues 25-34 (EKPTPEEIEE) show a composition bias toward basic and acidic residues. The SAM-dependent MTase TRM10-type domain occupies 99 to 319 (KAQPIPSRQI…KVLPPRKIKS (221 aa)). Low complexity predominate over residues 204–215 (GNSNSNTTNSTD). S-adenosyl-L-methionine contacts are provided by residues 225 to 226 (LT), Gly-245, 249 to 253 (DKNRH), Cys-257, Leu-271, and 283 to 285 (HVL). Asp-249 (proton acceptor) is an active-site residue.

It belongs to the class IV-like SAM-binding methyltransferase superfamily. TRM10 family. Monomer.

The protein resides in the cytoplasm. The protein localises to the nucleus. The catalysed reaction is guanosine(9) in tRNA + S-adenosyl-L-methionine = N(1)-methylguanosine(9) in tRNA + S-adenosyl-L-homocysteine + H(+). S-adenosyl-L-methionine-dependent guanine N(1)-methyltransferase that catalyzes the formation of N(1)-methylguanine at position 9 (m1G9) in cytoplasmic tRNA. This Candida albicans (strain SC5314 / ATCC MYA-2876) (Yeast) protein is tRNA (guanine(9)-N1)-methyltransferase.